The sequence spans 1658 residues: Protein TIC 214 (1658 aa).

Helical transmembrane passes span 28–48 (FGLYYGFLAALPIGLSQILTI), 52–72 (LLGGNTGGTLAVSGSIMGQLI), 82–102 (IYVMLLKPHAITLLVLPYMLF), 130–150 (IFLDSFILSLLNPVILPSPVF), 165–185 (ISFVISSSFGWLGGYILFINL), and 199–219 (VNYPLIKSIINQIFSIIILAL).

This sequence belongs to the TIC214 family. As to quaternary structure, part of the Tic complex.

It localises to the plastid. The protein resides in the chloroplast inner membrane. Functionally, involved in protein precursor import into chloroplasts. May be part of an intermediate translocation complex acting as a protein-conducting channel at the inner envelope. This is Protein TIC 214 from Huperzia lucidula (Shining clubmoss).